Here is a 481-residue protein sequence, read N- to C-terminus: UDP-N-acetylmuramoyl-L-alanyl-D-glutamate--L-lysine ligase (481 aa).

Ser-42 contributes to the UDP-N-acetyl-alpha-D-muramoyl-L-alanyl-D-glutamate binding site. 118–124 is a binding site for ATP; it reads GTKGKTT. Residues 160–161, Ser-187, and Arg-195 contribute to the UDP-N-acetyl-alpha-D-muramoyl-L-alanyl-D-glutamate site; that span reads TT. An N6-carboxylysine modification is found at Lys-229. The L-lysine recognition motif motif lies at 404–407; sequence DDPN.

It belongs to the MurCDEF family. MurE subfamily. Carboxylation is probably crucial for Mg(2+) binding and, consequently, for the gamma-phosphate positioning of ATP.

It localises to the cytoplasm. It carries out the reaction UDP-N-acetyl-alpha-D-muramoyl-L-alanyl-D-glutamate + L-lysine + ATP = UDP-N-acetyl-alpha-D-muramoyl-L-alanyl-gamma-D-glutamyl-L-lysine + ADP + phosphate + H(+). It functions in the pathway cell wall biogenesis; peptidoglycan biosynthesis. Catalyzes the addition of L-lysine to the nucleotide precursor UDP-N-acetylmuramoyl-L-alanyl-D-glutamate (UMAG) in the biosynthesis of bacterial cell-wall peptidoglycan. The chain is UDP-N-acetylmuramoyl-L-alanyl-D-glutamate--L-lysine ligase from Streptococcus sanguinis (strain SK36).